Reading from the N-terminus, the 734-residue chain is Photosystem I P700 chlorophyll a apoprotein A2 (734 aa).

The next 8 helical transmembrane spans lie at 46-69 (IFAS…FHVA), 135-158 (LYTG…LHLQ), 175-199 (LNHH…HVAI), 273-291 (IAHH…GHMY), 330-353 (IHFQ…QHMY), 369-395 (AALY…IFFI), 417-439 (AIKS…LYVH), and 517-535 (FLVH…LILV). [4Fe-4S] cluster-binding residues include C559 and C568. The next 2 helical transmembrane spans lie at 575–596 (AFYL…YWHW) and 643–665 (LSVW…MFLI). Chlorophyll a contacts are provided by H654, M662, and Y670. A phylloquinone-binding site is contributed by W671. Residues 707 to 727 (LVGLAHFSVGYIFTYAAFLIA) traverse the membrane as a helical segment.

Belongs to the PsaA/PsaB family. The PsaA/B heterodimer binds the P700 chlorophyll special pair and subsequent electron acceptors. PSI consists of a core antenna complex that captures photons, and an electron transfer chain that converts photonic excitation into a charge separation. The eukaryotic PSI reaction center is composed of at least 11 subunits. P700 is a chlorophyll a/chlorophyll a' dimer, A0 is one or more chlorophyll a, A1 is one or both phylloquinones and FX is a shared 4Fe-4S iron-sulfur center. is required as a cofactor.

Its subcellular location is the plastid. It localises to the chloroplast thylakoid membrane. It carries out the reaction reduced [plastocyanin] + hnu + oxidized [2Fe-2S]-[ferredoxin] = oxidized [plastocyanin] + reduced [2Fe-2S]-[ferredoxin]. In terms of biological role, psaA and PsaB bind P700, the primary electron donor of photosystem I (PSI), as well as the electron acceptors A0, A1 and FX. PSI is a plastocyanin-ferredoxin oxidoreductase, converting photonic excitation into a charge separation, which transfers an electron from the donor P700 chlorophyll pair to the spectroscopically characterized acceptors A0, A1, FX, FA and FB in turn. Oxidized P700 is reduced on the lumenal side of the thylakoid membrane by plastocyanin. In Amborella trichopoda, this protein is Photosystem I P700 chlorophyll a apoprotein A2.